Here is a 265-residue protein sequence, read N- to C-terminus: MNVNKFKSMKGKKPIVMLTAYDSVFASIVHQAGVDAILVGDSLANNVLGYSDTLPATMEDMIRHTQAVRRGAPEAFIIADMPFLSYQCSSDEAVRNAGRFLKEAGANAVKLEGGSFFSTTIERIVKSGIPVMGHLGLTPQSVNVFGGYKVQGKGDKSAKYLLEEAKALEEAGVFSIVLEMVVEETAKMITENLSIPTIGIGSGRFCDGQILVINDLLGMNPSFLPKFAKRYSNLFQISLEAVKNYVSDVQNHRFPFEENVFKAGE.

2 residues coordinate Mg(2+): D41 and D80. Residues 41-42 (DS), D80, and K110 contribute to the 3-methyl-2-oxobutanoate site. A Mg(2+)-binding site is contributed by E112. The active-site Proton acceptor is the E179.

Belongs to the PanB family. Homodecamer; pentamer of dimers. Mg(2+) serves as cofactor.

It is found in the cytoplasm. The enzyme catalyses 3-methyl-2-oxobutanoate + (6R)-5,10-methylene-5,6,7,8-tetrahydrofolate + H2O = 2-dehydropantoate + (6S)-5,6,7,8-tetrahydrofolate. It functions in the pathway cofactor biosynthesis; (R)-pantothenate biosynthesis; (R)-pantoate from 3-methyl-2-oxobutanoate: step 1/2. Its function is as follows. Catalyzes the reversible reaction in which hydroxymethyl group from 5,10-methylenetetrahydrofolate is transferred onto alpha-ketoisovalerate to form ketopantoate. This is 3-methyl-2-oxobutanoate hydroxymethyltransferase from Pseudothermotoga lettingae (strain ATCC BAA-301 / DSM 14385 / NBRC 107922 / TMO) (Thermotoga lettingae).